Here is a 235-residue protein sequence, read N- to C-terminus: Ribonuclease PH (235 aa).

Phosphate-binding positions include Arg86 and Gly124–Arg126.

The protein belongs to the RNase PH family. In terms of assembly, homohexameric ring arranged as a trimer of dimers.

It catalyses the reaction tRNA(n+1) + phosphate = tRNA(n) + a ribonucleoside 5'-diphosphate. Its function is as follows. Phosphorolytic 3'-5' exoribonuclease that plays an important role in tRNA 3'-end maturation. Removes nucleotide residues following the 3'-CCA terminus of tRNAs; can also add nucleotides to the ends of RNA molecules by using nucleoside diphosphates as substrates, but this may not be physiologically important. Probably plays a role in initiation of 16S rRNA degradation (leading to ribosome degradation) during starvation. This is Ribonuclease PH from Francisella tularensis subsp. tularensis (strain FSC 198).